The sequence spans 438 residues: AP-2 complex subunit mu (438 aa).

The MHD domain occupies 177–437 (KNEVFLDIVE…ITKAGSYEIR (261 aa)).

This sequence belongs to the adaptor complexes medium subunit family. In terms of assembly, adaptor protein complex 2 (AP-2) is a heterotetramer composed of two large adaptins (alpha-type and beta-type subunits), a medium adaptin (mu-type subunit) and a small adaptin (sigma-type subunit).

The protein localises to the cell membrane. It is found in the membrane. Its subcellular location is the coated pit. It localises to the golgi apparatus. The protein resides in the trans-Golgi network membrane. Subunit of the adaptor protein complex 2 (AP-2). Adaptor protein complexes function in protein transport via transport vesicles in different membrane traffic pathways. Adaptor protein complexes are vesicle coat components and appear to be involved in cargo selection and vesicle formation. AP-2 is involved in clathrin-dependent endocytosis in which cargo proteins are incorporated into vesicles surrounded by clathrin (clathrin-coated vesicles, CCVs) which are destined for fusion with the early endosome. AP-2 recognizes Y-X-X-Phi endocytosis signal motif within the cytosolic tails of transmembrane cargo molecules. The complex binds polyphosphoinositides. This is AP-2 complex subunit mu (AP2M) from Arabidopsis thaliana (Mouse-ear cress).